Consider the following 1015-residue polypeptide: SPOC domain-containing protein 1 (1015 aa).

4 disordered regions span residues 73 to 97 (MVSPEDPTLSKEGLSAKGPPPSPVL), 118 to 159 (GFSL…EPGG), 213 to 320 (LYPE…PRLE), and 344 to 406 (AASS…MTPL). Over residues 304-320 (SQDHAEGASKKDFPRLE) the composition is skewed to basic and acidic residues. Over residues 373–382 (AHPTPCQSDP) the composition is skewed to polar residues. Residues 388-397 (AEPHQQRAED) are compositionally biased toward basic and acidic residues. In terms of domain architecture, TFIIS central spans 410–530 (VRSTVVRAMQ…IIEQQQKELY (121 aa)). Residues 643–685 (IQKAPGPAPASSPEVLKVGETPPKEPQDRLQMPAGLKNAPPSP) form a disordered region. Positions 688–791 (WEGSLDMFSI…VQQVKMVLLP (104 aa)) constitute an SPOC domain. Disordered regions lie at residues 858–906 (PEDR…PGWG) and 967–1015 (QSQD…EHEC). Over residues 967 to 978 (QSQDSLPPSTVV) the composition is skewed to polar residues.

As to quaternary structure, interacts with DNMT3A, DNMT3C and DNMT3L. Interacts with C19orf84 homolog. Interacts with SPIN1; promoting recruitment to transposons marked with histone H3 trimethylated at both 'Lys-4' and 'Lys-9' (H3K4me3K9me3).

It localises to the nucleus. It is found in the chromosome. Functionally, protein adapter that acts as an essential executor of PIWIL4-piRNA pathway directed transposon DNA methylation and silencing in the male embryonic germ cells. Recruited to young transposons, which are specifically marked with histone H3 trimethylated at both 'Lys-4' and 'Lys-9' (H3K4me3K9me3), via its association with SPIN1 chromatin reader, and associates with the de novo DNA methylation machinery and repressive chromatin remodeling complexes. Following this, PIWIL4 engages with nascent transposable element transcript to direct piRNA-directed DNA methylation. Not required for piRNA biosynthesis. This chain is SPOC domain-containing protein 1, found in Mus musculus (Mouse).